The chain runs to 427 residues: Protein TIFY 6a (427 aa).

The span at 1 to 25 shows a compositional bias: basic and acidic residues; the sequence is MERDFLGAIWRKEEAAGKPEEHSDY. 2 disordered regions span residues 1-32 and 128-154; these read MERDFLGAIWRKEEAAGKPEEHSDYRGGGGGA and YGVAAPHHFPSPSPSPRHPVPFGHANP. The segment covering 136–146 has biased composition (pro residues); it reads FPSPSPSPRHP. Positions 196–231 constitute a Tify domain; it reads QNPKVTQMTIFYDGLVNVFDNIPVEKAQELMLLASR. Positions 296–327 are disordered; it reads SFSSSNDSAGPKSGGLPLAVTPLSQASPSQPI. The span at 317–327 shows a compositional bias: polar residues; the sequence is PLSQASPSQPI. The short motif at 343 to 367 is the Jas element; the sequence is PQARKASLARFLEKRKERVSSVAPY. The Nuclear localization signal motif lies at 345-352; it reads ARKASLAR. A disordered region spans residues 361-427; it reads VSSVAPYPSS…QEPPSTKLQI (67 aa). Polar residues-rich tracts occupy residues 369–402 and 411–427; these read SSKSPLESSDTIGSPSTPSKSSCTDITPSTNNCE and RNISFSSQEPPSTKLQI.

Belongs to the TIFY/JAZ family. In terms of assembly, interacts with COI1A. Interacts with COI1A and COI1B in a coronatine-dependent manner. Coronatine is an analog of jasmonoyl isoleucine (JA-Ile). Ubiquitinated. Targeted for degradation by the SCF(COI1) E3 ubiquitin ligase-proteasome pathway during jasmonate signaling.

It localises to the nucleus. Functionally, repressor of jasmonate responses. This chain is Protein TIFY 6a, found in Oryza sativa subsp. japonica (Rice).